Reading from the N-terminus, the 1403-residue chain is Centrosomal protein of 162 kDa (1403 aa).

Positions 19–44 (ELSDDSFENSNETPSQPNKDRKKKDT) are disordered. Over residues 26-35 (ENSNETPSQP) the composition is skewed to polar residues. Phosphoserine occurs at positions 156 and 159. Disordered regions lie at residues 171-235 (NVEP…EKTG), 305-342 (DTGE…TTES), and 449-586 (NPSL…SDDS). A compositionally biased stretch (basic and acidic residues) spans 176 to 189 (EGGRENESEHKELP). A compositionally biased stretch (acidic residues) spans 192–204 (YSDDFEDAEDTDE). The segment covering 206–220 (LITKDEETRPKENPE) has biased composition (basic and acidic residues). A compositionally biased stretch (polar residues) spans 449 to 466 (NPSLLPQDNKANQTSRSR). Serine 468 bears the Phosphoserine mark. A compositionally biased stretch (basic residues) spans 481–496 (PCKKARSAPPLPRRKP). A compositionally biased stretch (polar residues) spans 504–517 (ARSSGYSKPSSPLQ). Composition is skewed to basic and acidic residues over residues 522-532 (LEKKTSKDNTK) and 567-581 (PHRE…RPED). 3 coiled-coil regions span residues 610–1120 (KRAQ…MLSR), 1170–1205 (EVLE…QLES), and 1234–1385 (CQNA…LHRQ).

Belongs to the CEP162 family. In terms of assembly, interacts with alpha-tubulin. Interacts with CPNE4. Interacts with CEP290.

It is found in the cytoplasm. The protein resides in the cytoskeleton. It localises to the microtubule organizing center. Its subcellular location is the centrosome. The protein localises to the centriole. It is found in the spindle. The protein resides in the nucleus. Required to promote assembly of the transition zone in primary cilia. Acts by specifically recognizing and binding the axonemal microtubule. Localizes to the distal ends of centrioles before ciliogenesis and directly binds to axonemal microtubule, thereby promoting and restricting transition zone formation specifically at the cilia base. Required to mediate CEP290 association with microtubules. This is Centrosomal protein of 162 kDa (Cep162) from Rattus norvegicus (Rat).